A 756-amino-acid chain; its full sequence is Polyribonucleotide nucleotidyltransferase (756 aa).

Mg(2+)-binding residues include D527 and D533. The region spanning 593 to 652 (PRITTIKVPVDKIGEVIGPKGKMINSITEETGASISIEDDGTVFVGASNGEAAQAAIDKI) is the KH domain. One can recognise an S1 motif domain in the interval 664–733 (GERFLGTVVK…NRGKISLVLV (70 aa)).

Belongs to the polyribonucleotide nucleotidyltransferase family. Mg(2+) serves as cofactor.

Its subcellular location is the cytoplasm. The catalysed reaction is RNA(n+1) + phosphate = RNA(n) + a ribonucleoside 5'-diphosphate. Functionally, involved in mRNA degradation. Catalyzes the phosphorolysis of single-stranded polyribonucleotides processively in the 3'- to 5'-direction. This Mycolicibacterium gilvum (strain PYR-GCK) (Mycobacterium gilvum (strain PYR-GCK)) protein is Polyribonucleotide nucleotidyltransferase.